The sequence spans 230 residues: Rab15 effector protein (230 aa).

Gly-2 is lipidated: N-myristoyl glycine.

Interacts with the GTP-bound form of RAB15, RAB3A-D and RAB34.

Its subcellular location is the early endosome membrane. Effector that interacts with Rab GTPases in their active form (GTP-bound) including RAB15, RAB3A-D and RAB34. Controls downstream signaling such as cell proliferation and cell migration. Also regulates transferrin receptor recycling from the endocytic recycling compartment. The polypeptide is Rab15 effector protein (Mus musculus (Mouse)).